A 200-amino-acid polypeptide reads, in one-letter code: Transgelin (200 aa).

S2 is modified (N-acetylserine). S11 is subject to Phosphoserine. In terms of domain architecture, Calponin-homology (CH) spans 26 to 136 (PEAIQNIKIW…QTLKSLSRYA (111 aa)). The segment at 144–168 (FPVLGPQLSTKKPRPPVKSKPKHLQ) is disordered. The segment at 151–164 (LSTKKPRPPVKSKP) is interaction with SH3 domain of ABP1. Basic residues predominate over residues 154–165 (KKPRPPVKSKPK).

As to quaternary structure, binds to actin. Interacts with ABP1.

It is found in the cytoplasm. The protein localises to the cytoskeleton. The protein resides in the actin patch. Its function is as follows. Has actin-binding and actin-bundling activity. Stabilizes actin filaments against disassembly. The sequence is that of Transgelin (SCP1) from Saccharomyces cerevisiae (strain ATCC 204508 / S288c) (Baker's yeast).